Here is a 619-residue protein sequence, read N- to C-terminus: Replication restart protein PriA (619 aa).

A Helicase ATP-binding domain is found at 119–285 (LKELQKHPAS…KDKALVRLKG (167 aa)). 132-139 (GDTGSGKT) contacts ATP. Residues 228 to 231 (DEEH) carry the DEAH box motif. 8 residues coordinate Zn(2+): Cys336, Cys339, Cys345, Cys348, Cys363, Cys366, Cys376, and Cys379. The 162-residue stretch at 371 to 532 (PIPKICNACQ…ELYPPFSRLC (162 aa)) folds into the Helicase C-terminal domain.

This sequence belongs to the helicase family. PriA subfamily. As to quaternary structure, component of the replication restart primosome. The cofactor is Zn(2+).

It carries out the reaction Couples ATP hydrolysis with the unwinding of duplex DNA by translocating in the 3'-5' direction.. The enzyme catalyses ATP + H2O = ADP + phosphate + H(+). In terms of biological role, initiates the restart of stalled replication forks, which reloads the replicative helicase on sites other than the origin of replication. Recognizes and binds to abandoned replication forks and remodels them to uncover a helicase loading site. Promotes assembly of the primosome at these replication forks. The protein is Replication restart protein PriA of Helicobacter pylori (strain J99 / ATCC 700824) (Campylobacter pylori J99).